Consider the following 473-residue polypeptide: ATP synthase subunit beta (473 aa).

153–160 (GGAGVGKT) serves as a coordination point for ATP.

The protein belongs to the ATPase alpha/beta chains family. F-type ATPases have 2 components, CF(1) - the catalytic core - and CF(0) - the membrane proton channel. CF(1) has five subunits: alpha(3), beta(3), gamma(1), delta(1), epsilon(1). CF(0) has three main subunits: a(1), b(2) and c(9-12). The alpha and beta chains form an alternating ring which encloses part of the gamma chain. CF(1) is attached to CF(0) by a central stalk formed by the gamma and epsilon chains, while a peripheral stalk is formed by the delta and b chains.

The protein localises to the cell inner membrane. It catalyses the reaction ATP + H2O + 4 H(+)(in) = ADP + phosphate + 5 H(+)(out). Functionally, produces ATP from ADP in the presence of a proton gradient across the membrane. The catalytic sites are hosted primarily by the beta subunits. The polypeptide is ATP synthase subunit beta (Rickettsia conorii (strain ATCC VR-613 / Malish 7)).